Consider the following 902-residue polypeptide: Potassium/sodium hyperpolarization-activated cyclic nucleotide-gated channel 1 (902 aa).

The interval 1–75 (MEGGGKPNSA…PAGSFEDAEG (75 aa)) is disordered. Over 1 to 131 (MEGGGKPNSA…WIIHPYSDFR (131 aa)) the chain is Cytoplasmic. The chain crosses the membrane as a helical span at residues 132–153 (FYWDLIMLIMMVGNLVIIPVGI). Residues 154-162 (TFFTEQTTT) are Extracellular-facing. The chain crosses the membrane as a helical span at residues 163 to 183 (PWIIFNVASDTVFLLDLIMNF). Over 184-204 (RTGTVNEDSSEIILDPKVIKM) the chain is Cytoplasmic. A helical transmembrane segment spans residues 205–225 (NYLKSWFVVDFISSIPVDYIF). Topologically, residues 226-249 (LIVEKGMDSEVYKTARALRIVRFT) are extracellular. A helical; Voltage-sensor transmembrane segment spans residues 250-270 (KILSLLRLLRLSRLIRYIHQW). Topologically, residues 271–284 (EEIFHMTYDLASAV) are cytoplasmic. A helical transmembrane segment spans residues 285–307 (VRIFNLIGMMLLLCHWDGCLQFL). The Extracellular portion of the chain corresponds to 308 to 333 (VPLLQDFPPDCWVSLNEMVNDSWGKQ). An N-linked (GlcNAc...) asparagine glycan is attached at asparagine 327. The segment at residues 334-355 (YSYALFKAMSHMLCIGYGAQAP) is an intramembrane region (pore-forming). The short motif at 347 to 351 (CIGYG) is the Selectivity filter element. Topologically, residues 356 to 360 (VSMSD) are extracellular. A helical membrane pass occupies residues 361-381 (LWITMLSMIVGATCYAMFVGH). The Cytoplasmic segment spans residues 382-902 (ATALIQSLDS…AEKPRFASNL (521 aa)). 3',5'-cyclic AMP is bound by residues glycine 528, glutamate 529, cysteine 531, arginine 538, threonine 539, arginine 579, and arginine 582. Disordered regions lie at residues 634 to 681 (TALN…QPSA), 713 to 824 (ASQL…VGES), and 858 to 902 (MSSG…ASNL). 3 stretches are compositionally biased toward low complexity: residues 639–680 (TSST…PQPS), 720–736 (QQPQ…QTQP), and 744–769 (QPQQ…QQPQ). Over residues 770–793 (TPGSSTPKNEVHKSTQALHNTNLT) the composition is skewed to polar residues. Pro residues predominate over residues 867–877 (RGVPPAPPPPA). A compositionally biased stretch (basic and acidic residues) spans 889 to 902 (KDPDAEKPRFASNL).

It belongs to the potassium channel HCN family. Homotetramer. Heterotetramer with HCN2. The potassium channel is composed of a homo- or heterotetrameric complex of pore-forming subunits. Interacts with KCNE2. Interacts with the SH3 domain of CSK. In terms of tissue distribution, highly expressed in cerebral cortex, cerebellum, throughout the hippocampus, in medial habenula, anterior dorsal nucleus in the thalamus, tenia tecta, several nuclei of the general motor system and in optic nerve layer. Detected in a subset of elongated cells in taste buds.

It is found in the cell membrane. It catalyses the reaction Na(+)(in) = Na(+)(out). The enzyme catalyses K(+)(in) = K(+)(out). With respect to regulation, activated by cAMP, and at 10-100 times higher concentrations, also by cGMP. cAMP binding promotes tetramerization and formation of an active channel. Compared to other family members, cAMP has less stimulatory effect on HCN1 because part of the molecules already contain bound cAMP and form homotetramers when cAMP levels are low, this inherent tetramerization in HCN1 results in a weaker response to increased cAMP. Functionally, hyperpolarization-activated ion channel that are permeable to sodium and potassium ions. Exhibits weak selectivity for potassium over sodium ions. Contributes to the native pacemaker currents in heart (If) and in neurons (Ih). Participates in cerebellar mechanisms of motor learning. May mediate responses to sour stimuli. This Rattus norvegicus (Rat) protein is Potassium/sodium hyperpolarization-activated cyclic nucleotide-gated channel 1 (Hcn1).